A 478-amino-acid chain; its full sequence is Glycogen synthase (478 aa).

Lys16 is a binding site for ADP-alpha-D-glucose.

Belongs to the glycosyltransferase 1 family. Bacterial/plant glycogen synthase subfamily.

It catalyses the reaction [(1-&gt;4)-alpha-D-glucosyl](n) + ADP-alpha-D-glucose = [(1-&gt;4)-alpha-D-glucosyl](n+1) + ADP + H(+). It participates in glycan biosynthesis; glycogen biosynthesis. Its function is as follows. Synthesizes alpha-1,4-glucan chains using ADP-glucose. The protein is Glycogen synthase of Lachnospira eligens (strain ATCC 27750 / DSM 3376 / VPI C15-48 / C15-B4) (Eubacterium eligens).